Reading from the N-terminus, the 226-residue chain is uncharacterized protein (226 aa).

Belongs to the IIV-6 350L family.

This is an uncharacterized protein from Invertebrate iridescent virus 3 (IIV-3).